Consider the following 407-residue polypeptide: Methylthioribose kinase (407 aa).

ATP-binding positions include Asn40, Lys57, and Glu111–Leu113. Asp229 serves as a coordination point for substrate. Asp246–Glu248 is an ATP binding site. Arg344 lines the substrate pocket.

It belongs to the methylthioribose kinase family. In terms of assembly, homodimer.

The enzyme catalyses 5-(methylsulfanyl)-D-ribose + ATP = 5-(methylsulfanyl)-alpha-D-ribose 1-phosphate + ADP + H(+). It participates in amino-acid biosynthesis; L-methionine biosynthesis via salvage pathway; S-methyl-5-thio-alpha-D-ribose 1-phosphate from S-methyl-5'-thioadenosine (hydrolase route): step 2/2. Functionally, catalyzes the phosphorylation of methylthioribose into methylthioribose-1-phosphate. The sequence is that of Methylthioribose kinase from Yersinia pestis bv. Antiqua (strain Angola).